The following is a 202-amino-acid chain: IMP cyclohydrolase (202 aa).

Positions 29-52 (VQRDGTVTVEPTPDAPETDNPYIS) are disordered.

The protein belongs to the archaeal IMP cyclohydrolase family.

It catalyses the reaction IMP + H2O = 5-formamido-1-(5-phospho-D-ribosyl)imidazole-4-carboxamide. The protein operates within purine metabolism; IMP biosynthesis via de novo pathway; IMP from 5-formamido-1-(5-phospho-D-ribosyl)imidazole-4-carboxamide: step 1/1. Its function is as follows. Catalyzes the cyclization of 5-formylamidoimidazole-4-carboxamide ribonucleotide to IMP. This Haloarcula marismortui (strain ATCC 43049 / DSM 3752 / JCM 8966 / VKM B-1809) (Halobacterium marismortui) protein is IMP cyclohydrolase.